The chain runs to 258 residues: MMGVLEDQVIIVTGAASGIGMATAIAALREGARVFGVDIAPQPATLKENNKFRYAQCDLAVESSIDSVVSNCLEVFEGRIDALFNIAGVMDHHGSVDTVTDSDWDRCIAINLTAPLKLMRAVIPTMRAHKRGNIINMSSRAGVSGAAAGVAYTASKHGLIGLSKNVAWRFKGDNIRCNVVCPGGVATGIISNMDPSQFDHEALDTIKPILGAVYSNRPEGYTQMLPEEVAETVIFLASDQSARINGAVLPVDDAWSTI.

NADP(+) contacts are provided by valine 12, aspartate 58, and arginine 120. The Proton donor role is filled by serine 138. Residues tyrosine 152, lysine 156, and valine 185 each coordinate NADP(+). Tyrosine 152 functions as the Proton acceptor in the catalytic mechanism. Lysine 156 functions as the Lowers pKa of active site Tyr in the catalytic mechanism.

The protein belongs to the short-chain dehydrogenases/reductases (SDR) family.

Its pathway is secondary metabolite biosynthesis; terpenoid biosynthesis. In terms of biological role, short-chain dehydrogenase/reductase; part of the gene cluster that mediates the biosynthesis of 15-deoxyoxalicine B. The first step of the pathway is the synthesis of nicotinyl-CoA from nicotinic acid by the nicotinic acid-CoA ligase olcI. Nicotinyl-CoA is then a substrate of polyketide synthase olcA to produce 4-hydroxy-6-(3-pyridinyl)-2H-pyran-2-one (HPPO) which is further prenylated by the polyprenyl transferase olcH to yield geranylgeranyl-HPPO. Geranylgeranyl pyrophosphate is provided by the cluster-specific geranylgeranyl pyrophosphate synthase olcC. The FAD-dependent monooxygenase olcE catalyzes the epoxidation of geranylgeranyl-HPPO and the terpene cyclase olcD catalyzes the cyclization of the terpenoid component, resulting in the formation of the tricyclic terpene moiety seen in predecaturin E. The cytochrome P450 monooxygenase then catalyzes the allylic oxidation of predecaturin E, which is followed by spirocylization with concomitant loss of one molecule of water to form decaturin E. Decaturin E is the substrate of the cytochrome P450 monooxygenase olcJ which hydroxylates it at the C-29 position to form decaturin F. The short-chain dehydrogenase/reductase olcF may catalyze the oxidation of decaturin F to generate the 29-hydroxyl-27-one intermediate, and subsequent hemiacetal formation probably leads to the formation of decaturin C. The dioxygenase olcK may be a peroxisomal enzyme that catalyzes the hydroxylation of decaturin C into decaturin A once decaturin C is shuttled into the peroxisome by the MFS transporter olcL. Finally the cytochrome P450 monooxygenase olcB catalyzes the oxidative rearrangement to yield 15-deoxyoxalicine B. In the absence of olcJ, decaturin E may be shunted to a pathway in which it is oxidized to a ketone, possibly by olcF, to form decaturin D, which undergoes further allylic oxidation to yield decaturin G. Moreover, in the absence of oclK or oclL, oclB can convert decaturin C into 15-deoxyoxalicine A. This chain is Short-chain dehydrogenase/reductase olcF, found in Penicillium canescens.